The sequence spans 481 residues: NADH-quinone oxidoreductase subunit N (481 aa).

The next 13 membrane-spanning stretches (helical) occupy residues 14–34 (LILS…GDGF), 38–57 (IGWG…TGPA), 76–96 (FAKL…PGFF), 108–128 (PVLI…GDLL), 162–182 (FVLG…LYGF), 204–224 (MFGM…VPFH), 235–255 (PTPV…ALLL), 272–292 (IVVF…IGQT), 297–317 (LLAY…AAGS), 323–343 (ATMT…ICVL), 369–389 (LAAA…LFGF), 403–423 (GFWP…FYYL), and 449–469 (GLIT…IPLL).

It belongs to the complex I subunit 2 family. In terms of assembly, NDH-1 is composed of 14 different subunits. Subunits NuoA, H, J, K, L, M, N constitute the membrane sector of the complex.

The protein resides in the cell inner membrane. The catalysed reaction is a quinone + NADH + 5 H(+)(in) = a quinol + NAD(+) + 4 H(+)(out). NDH-1 shuttles electrons from NADH, via FMN and iron-sulfur (Fe-S) centers, to quinones in the respiratory chain. The immediate electron acceptor for the enzyme in this species is believed to be ubiquinone. Couples the redox reaction to proton translocation (for every two electrons transferred, four hydrogen ions are translocated across the cytoplasmic membrane), and thus conserves the redox energy in a proton gradient. The polypeptide is NADH-quinone oxidoreductase subunit N (Rhizorhabdus wittichii (strain DSM 6014 / CCUG 31198 / JCM 15750 / NBRC 105917 / EY 4224 / RW1) (Sphingomonas wittichii)).